The following is a 92-amino-acid chain: MSRSVWKGPFVDGYLLKKADKSRESGRKEVIKTWSRRSTILPQFVGLTFGVYNGQKHIPVSVSEEMVGHKLGEFAPTRTYYGHGADKKAKRK.

This sequence belongs to the universal ribosomal protein uS19 family.

Its function is as follows. Protein S19 forms a complex with S13 that binds strongly to the 16S ribosomal RNA. The protein is Small ribosomal subunit protein uS19 of Chelativorans sp. (strain BNC1).